The sequence spans 292 residues: Ribonuclease Z (292 aa).

Histidine 60, histidine 62, aspartate 64, histidine 65, histidine 132, aspartate 200, and histidine 256 together coordinate Zn(2+). Aspartate 64 (proton acceptor) is an active-site residue.

Belongs to the RNase Z family. As to quaternary structure, homodimer. Zn(2+) is required as a cofactor.

It catalyses the reaction Endonucleolytic cleavage of RNA, removing extra 3' nucleotides from tRNA precursor, generating 3' termini of tRNAs. A 3'-hydroxy group is left at the tRNA terminus and a 5'-phosphoryl group is left at the trailer molecule.. Its function is as follows. Zinc phosphodiesterase, which displays some tRNA 3'-processing endonuclease activity. Probably involved in tRNA maturation, by removing a 3'-trailer from precursor tRNA. This is Ribonuclease Z from Sulfolobus acidocaldarius (strain ATCC 33909 / DSM 639 / JCM 8929 / NBRC 15157 / NCIMB 11770).